Consider the following 117-residue polypeptide: MSGENQETKAQEESSALEQKEIDDKVVSPEKSEEIKLKARYPNLGPKPGGSDFLRKRLQKGQKYFDSGDYNMAKAKMKNKQLPTAASDKTEVTGDHIPTPQDLPQRKPSLVASKLAG.

Over residues 1 to 37 (MSGENQETKAQEESSALEQKEIDDKVVSPEKSEEIKL) the composition is skewed to basic and acidic residues. The disordered stretch occupies residues 1–54 (MSGENQETKAQEESSALEQKEIDDKVVSPEKSEEIKLKARYPNLGPKPGGSDFL). Phosphoserine; by CDK2 is present on S28. S67 bears the Phosphoserine; by GWL mark. The interval 78–117 (KNKQLPTAASDKTEVTGDHIPTPQDLPQRKPSLVASKLAG) is disordered. T99 bears the Phosphothreonine; by CDK2 mark. At S109 the chain carries Phosphoserine; by PKA.

Belongs to the endosulfine family. As to quaternary structure, interacts (when phosphorylated at Ser-67) with ppp2r2d. Phosphorylation at Ser-67 by gwl during mitosis is essential for interaction with ppp2r2d (PR55-delta) and subsequent inactivation of PP2A. Phosphorylated by PKA.

It localises to the cytoplasm. Its function is as follows. Protein phosphatase inhibitor that specifically inhibits protein phosphatase 2A (PP2A) during mitosis. When phosphorylated at Ser-67 during mitosis, specifically interacts with ppp2r2d (PR55-delta) and inhibits its activity, leading to inactivation of PP2A, an essential condition to keep cyclin-B1-CDK1 activity high during M phase. The chain is cAMP-regulated phosphoprotein 19-A (arpp19-a) from Xenopus laevis (African clawed frog).